The primary structure comprises 192 residues: Segregation and condensation protein B (192 aa).

It belongs to the ScpB family. In terms of assembly, homodimer. Homodimerization may be required to stabilize the binding of ScpA to the Smc head domains. Component of a cohesin-like complex composed of ScpA, ScpB and the Smc homodimer, in which ScpA and ScpB bind to the head domain of Smc. The presence of the three proteins is required for the association of the complex with DNA.

The protein resides in the cytoplasm. Its function is as follows. Participates in chromosomal partition during cell division. May act via the formation of a condensin-like complex containing Smc and ScpA that pull DNA away from mid-cell into both cell halves. The chain is Segregation and condensation protein B from Oceanobacillus iheyensis (strain DSM 14371 / CIP 107618 / JCM 11309 / KCTC 3954 / HTE831).